The following is a 731-amino-acid chain: MGVGIQTMWSILLLFSCIFSAASASVSYDHKAIIINGQKRILISGSIHYPRSTPEMWPDLIQKAKDGGLDVIQTYVFWNGHEPSPGNYYFEERYDLVKFIKLVQQEGLFVNLRIGPYVCAEWNFGGFPVWLKYVPGIAFRTDNEPFKAAMQKFTEKIVSMMKAEKLFQTQGGPIILSQIENEFGPVEWEIGAPGKAYTKWAAQMAVGLDTGVPWIMCKQEDAPDPVIDTCNGFYCENFKPNKDYKPKMWTEVWTGWYTEFGGAVPTRPAEDVAFSVARFIQSGGSFLNYYMYHGGTNFGRTAGGPFMATSYDYDAPLDEYGLPREPKWGHLRDLHKAIKSCESALVSVDPSVTKLGSNQEAHVFKSESDCAAFLANYDAKYSVKVSFGGGQYDLPPWSISILPDCKTEVYNTAKVGSQSSQVQMTPVHSGFPWQSFIEETTSSDETDTTTLDGLYEQINITRDTTDYLWYMTDITIGSDEAFLKNGKSPLLTIFSAGHALNVFINGQLSGTVYGSLENPKLSFSQNVNLRSGINKLALLSISVGLPNVGTHFETWNAGVLGPITLKGLNSGTWDMSGWKWTYKTGLKGEALGLHTVTGSSSVEWVEGPSMAEKQPLTWYKATFNAPPGDAPLALDMGSMGKGQIWINGQSVGRHWPGYIARGSCGDCSYAGTYDDKKCRTHCGEPSQRWYHIPRSWLTPTGNLLVVFEEWGGDPSRISLVERGTALDAKKL.

Positions 1–23 (MGVGIQTMWSILLLFSCIFSAAS) are cleaved as a signal peptide. The active-site Proton donor is the Glu-182. Catalysis depends on Glu-251, which acts as the Nucleophile. The N-linked (GlcNAc...) asparagine glycan is linked to Asn-459.

The protein belongs to the glycosyl hydrolase 35 family.

It is found in the secreted. The protein localises to the extracellular space. Its subcellular location is the apoplast. It catalyses the reaction Hydrolysis of terminal non-reducing beta-D-galactose residues in beta-D-galactosides.. Its function is as follows. Involved in cell wall degradation. Degrades polysaccharides containing beta-(1--&gt;4)-linked galactans, acting as an exo-(1--&gt;4)-beta-D-galactanase. This chain is Beta-galactosidase, found in Malus domestica (Apple).